The sequence spans 209 residues: Uracil phosphoribosyltransferase (209 aa).

Residues Arg-79, Arg-104, and 131–139 each bind 5-phospho-alpha-D-ribose 1-diphosphate; that span reads DPMLATGGS. Uracil contacts are provided by residues Ile-194 and 199 to 201; that span reads GDA. Asp-200 contributes to the 5-phospho-alpha-D-ribose 1-diphosphate binding site.

This sequence belongs to the UPRTase family. The cofactor is Mg(2+).

It catalyses the reaction UMP + diphosphate = 5-phospho-alpha-D-ribose 1-diphosphate + uracil. The protein operates within pyrimidine metabolism; UMP biosynthesis via salvage pathway; UMP from uracil: step 1/1. Allosterically activated by GTP. Its function is as follows. Catalyzes the conversion of uracil and 5-phospho-alpha-D-ribose 1-diphosphate (PRPP) to UMP and diphosphate. The protein is Uracil phosphoribosyltransferase of Agathobacter rectalis (strain ATCC 33656 / DSM 3377 / JCM 17463 / KCTC 5835 / VPI 0990) (Eubacterium rectale).